The following is an 823-amino-acid chain: MKRHRPVSSSDSSDESPSTSFTSGSMYRIKSKIPNEHKKPAEVFRKDLISAMKLPDSHHINPDSYYLFADTWKEEWEKGVQVPASPDTVPQPSLRIIAEKVKDVLFIRPRKYIHCSSPDTTEPGYINIMELAASVCRYDLDDMDIFWLQELNEDLAEMGCGPVDENLMEKTVEVLERHCHENMNHAIETEEGLGIEYDEDVICDVCRSPDSEEGNDMVFCDKCNVCVHQACYGILKVPEGSWLCRSCVLGIYPQCVLCPKKGGALKTTKTGTKWAHVSCALWIPEVSIACPERMEPITKISHIPPSRWALVCNLCKLKTGACIQCSIKSCITAFHVTCAFEHGLEMKTILDEGDEVKFKSYCLKHSQNRQKLGEAEYPHHRAKEQSQAKSEKTSLRAQKLRELEEEFYSLVRVEDVAAELGMPTLAVDFIYNYWKLKRKSNFNKPLFPPKEDEENGLVQPKEESIHTRMRMFMHLRQDLERVRNLCYMISRREKLKLSHNKIQEQIFGLQVQLLNQEIDAGLPLTNALENSLFYPPPRITLKLKMPKSTPEDHRNSSTETDQQPHSPDSSSSVHSIRNMQVPQESLEMRTKSYPRYPLESKNNRLLASLSHSRSEAKESSPAWRTPSSECYHGQSLGKPLVLQAALHGQSSIGNGKSQPNSKFAKSNGLEGSWSGNVTQKDSSSEMFCDQEPVFSPHLVSQGSFRKSTVEHFSRSFKETTNRWVKNTEDLQCYVKPTKNMSPKEQFWGRQVLRRSAGRAPYQENDGYCPDLELSDSEAESDGNKEKVRVRKDSSDRENPPHDSRRDCHGKSKTHPLSHSSMQR.

The tract at residues 1–32 (MKRHRPVSSSDSSDESPSTSFTSGSMYRIKSK) is disordered. Positions 8–25 (SSSDSSDESPSTSFTSGS) are enriched in low complexity. Lys30 and Lys32 each carry N6-acetyllysine. Ser85 carries the phosphoserine modification. The PHD-type 1 zinc-finger motif lies at 200 to 250 (DVICDVCRSPDSEEGNDMVFCDKCNVCVHQACYGILKVPEGSWLCRSCVLG). The C2HC pre-PHD-type zinc finger occupies 252 to 286 (YPQCVLCPKKGGALKTTKTGTKWAHVSCALWIPEV). The segment at 310 to 366 (LVCNLCKLKTGACIQCSIKSCITAFHVTCAFEHGLEMKTILDEGDEVKFKSYCLKHS) adopts a PHD-type 2 zinc-finger fold. Disordered regions lie at residues 372-395 (LGEA…KTSL) and 542-576 (KLKM…VHSI). The span at 561 to 575 (DQQPHSPDSSSSVHS) shows a compositional bias: low complexity. Ser566 carries the phosphoserine modification. The residue at position 601 (Lys601) is an N6-acetyllysine. A Phosphoserine modification is found at Ser608. Residues 609–630 (LSHSRSEAKESSPAWRTPSSEC) form a disordered region. The residue at position 638 (Lys638) is an N6-acetyllysine. Composition is skewed to polar residues over residues 650–664 (SSIG…SKFA) and 673–684 (WSGNVTQKDSSS). Residues 650–684 (SSIGNGKSQPNSKFAKSNGLEGSWSGNVTQKDSSS) form a disordered region. Lys735 is modified (N6-acetyllysine). Residues 758–823 (RAPYQENDGY…HPLSHSSMQR (66 aa)) are disordered. A phosphoserine mark is found at Ser774, Ser776, and Ser780. The span at 781–809 (DGNKEKVRVRKDSSDRENPPHDSRRDCHG) shows a compositional bias: basic and acidic residues.

It belongs to the JADE family. In terms of assembly, component of the HBO1 complex composed at least of ING4 or ING5, KAT7/HBO1, MEAF6, and one of JADE1, JADE2 and JADE3. As to expression, ubiquitously expressed, with highest levels in placenta and uterus.

Its function is as follows. Scaffold subunit of some HBO1 complexes, which have a histone H4 acetyltransferase activity. The protein is Protein Jade-3 (JADE3) of Homo sapiens (Human).